Consider the following 206-residue polypeptide: Adenylate kinase (206 aa).

A disordered region spans residues 1-21 (MSQPKILLLGAPGAGKGTQSS). An ATP-binding site is contributed by 13–18 (GAGKGT). The NMP stretch occupies residues 33-61 (TTGDALRANKDMETEHGTPREFMEAGELV). AMP contacts are provided by residues Thr34, Arg39, 59–61 (ELV), 84–87 (GYPR), and Gln91. The tract at residues 120 to 153 (GRRMDPETGDIYHTEFNMPDDEEVRERLVQRDDD) is LID. Residues Arg121 and 130-131 (IY) each bind ATP. AMP-binding residues include Arg150 and Arg161. Ala189 is an ATP binding site.

Belongs to the adenylate kinase family. As to quaternary structure, monomer.

It is found in the cytoplasm. The enzyme catalyses AMP + ATP = 2 ADP. Its pathway is purine metabolism; AMP biosynthesis via salvage pathway; AMP from ADP: step 1/1. In terms of biological role, catalyzes the reversible transfer of the terminal phosphate group between ATP and AMP. Plays an important role in cellular energy homeostasis and in adenine nucleotide metabolism. The chain is Adenylate kinase from Natronomonas pharaonis (strain ATCC 35678 / DSM 2160 / CIP 103997 / JCM 8858 / NBRC 14720 / NCIMB 2260 / Gabara) (Halobacterium pharaonis).